A 650-amino-acid polypeptide reads, in one-letter code: Chaperone protein DnaK (650 aa).

Phosphothreonine; by autocatalysis is present on T200. Residues 611 to 634 are compositionally biased toward low complexity; that stretch reads AQQAGAAGAAGAAAEGASAQGGAQ. A disordered region spans residues 611 to 650; sequence AQQAGAAGAAGAAAEGASAQGGAQPPDDVVDADFKEVKKD.

Belongs to the heat shock protein 70 family.

Acts as a chaperone. The chain is Chaperone protein DnaK from Burkholderia pseudomallei (strain 1710b).